The chain runs to 491 residues: MSTTQRKDDSHLFTSSCTRQLQVQEDRQQQEKYVIAQPIFVFEKGEHNFKRPAEDSLEETAEPEFTGFLRKRVRSSSVTLHTTDPQSQGVATLSQTRLRSSSFTDVPTFPPCRPVRKNNVFMTSRLLQRSDDMNNVEQGPPMRSSEQVLRPAVLQPSQTQSCQKAGTTFGPGALKSYKTKEKAEHEISEVGSSSSLLSENLPNARSSIQLSTDPCISEAPSGCQPKEDKCSFTSCSSDFVFGENMVERVLGTQKLTQPPLQNLSYAKEKTFKSVLKFPNAVSNSDSIENISLVESAAAFSSKPSQKCLLEKIDVITGEETEHNVLKINCKIFVFNKATESWSERGQGILRLNDTAGRECGTLQSRLIMRNQGSLRLVLNSRLWAQMKIQRASQKNLRITATDLEDDGIKIFLIQASAKDTGFLYAAIHHRLVALRSLAKQGDGGPAESQSDTALPQLNGESCDEDEDEIAQVTKNGSDPSRWSHRQSIVCS.

Positions 270-441 constitute a RanBD1 domain; it reads TFKSVLKFPN…VALRSLAKQG (172 aa). A disordered region spans residues 440–468; it reads QGDGGPAESQSDTALPQLNGESCDEDEDE. The segment covering 447 to 459 has biased composition (polar residues); sequence ESQSDTALPQLNG.

As to quaternary structure, interacts with SMAD1, SMAD5 and SMAD8.

Its subcellular location is the nucleus. It localises to the cytoplasm. In terms of biological role, nuclear export factor for BMP-specific SMAD1/5/8 that plays a critical role in terminating BMP signaling and regulating mesenchymal stem cell differentiation by blocking osteoblast differentiation to promote myogenic differention. Directly recognizes dephosphorylated SMAD1/5/8 and mediates their nuclear export in a Ran-dependent manner. In Mus musculus (Mouse), this protein is Ran-binding protein 3-like (Ranbp3l).